The following is a 152-amino-acid chain: Large ribosomal subunit protein uL13 (152 aa).

This sequence belongs to the universal ribosomal protein uL13 family. In terms of assembly, part of the 50S ribosomal subunit.

Functionally, this protein is one of the early assembly proteins of the 50S ribosomal subunit, although it is not seen to bind rRNA by itself. It is important during the early stages of 50S assembly. This Borreliella afzelii (strain PKo) (Borrelia afzelii) protein is Large ribosomal subunit protein uL13.